The sequence spans 492 residues: Protein nucleotidyltransferase YdiU (492 aa).

Residues Gly-95, Gly-97, Arg-98, Lys-118, Asp-130, Gly-131, Arg-181, and Arg-188 each coordinate ATP. The Proton acceptor role is filled by Asp-257. Mg(2+) is bound by residues Asn-258 and Asp-267. Position 267 (Asp-267) interacts with ATP. The span at 466-475 shows a compositional bias: basic and acidic residues; the sequence is YDDQPEHAEY. The segment at 466-492 is disordered; sequence YDDQPEHAEYRQPPPPSEKPYQTFCGT.

It belongs to the SELO family. It depends on Mg(2+) as a cofactor. Requires Mn(2+) as cofactor.

The catalysed reaction is L-seryl-[protein] + ATP = 3-O-(5'-adenylyl)-L-seryl-[protein] + diphosphate. It carries out the reaction L-threonyl-[protein] + ATP = 3-O-(5'-adenylyl)-L-threonyl-[protein] + diphosphate. The enzyme catalyses L-tyrosyl-[protein] + ATP = O-(5'-adenylyl)-L-tyrosyl-[protein] + diphosphate. It catalyses the reaction L-histidyl-[protein] + UTP = N(tele)-(5'-uridylyl)-L-histidyl-[protein] + diphosphate. The catalysed reaction is L-seryl-[protein] + UTP = O-(5'-uridylyl)-L-seryl-[protein] + diphosphate. It carries out the reaction L-tyrosyl-[protein] + UTP = O-(5'-uridylyl)-L-tyrosyl-[protein] + diphosphate. Functionally, nucleotidyltransferase involved in the post-translational modification of proteins. It can catalyze the addition of adenosine monophosphate (AMP) or uridine monophosphate (UMP) to a protein, resulting in modifications known as AMPylation and UMPylation. This is Protein nucleotidyltransferase YdiU from Syntrophotalea carbinolica (strain DSM 2380 / NBRC 103641 / GraBd1) (Pelobacter carbinolicus).